Here is a 315-residue protein sequence, read N- to C-terminus: DNA-directed RNA polymerase subunit alpha (315 aa).

Residues 1–228 (MIGMEKPKIE…EHLELFISLT (228 aa)) are alpha N-terminal domain (alpha-NTD). An alpha C-terminal domain (alpha-CTD) region spans residues 245-315 (RNKLMEMTIE…FGLSLRQPDD (71 aa)).

It belongs to the RNA polymerase alpha chain family. In terms of assembly, homodimer. The RNAP catalytic core consists of 2 alpha, 1 beta, 1 beta' and 1 omega subunit. When a sigma factor is associated with the core the holoenzyme is formed, which can initiate transcription.

The catalysed reaction is RNA(n) + a ribonucleoside 5'-triphosphate = RNA(n+1) + diphosphate. DNA-dependent RNA polymerase catalyzes the transcription of DNA into RNA using the four ribonucleoside triphosphates as substrates. This chain is DNA-directed RNA polymerase subunit alpha, found in Symbiobacterium thermophilum (strain DSM 24528 / JCM 14929 / IAM 14863 / T).